A 190-amino-acid chain; its full sequence is NADH-quinone oxidoreductase subunit B (190 aa).

C69, C70, C134, and C164 together coordinate [4Fe-4S] cluster.

Belongs to the complex I 20 kDa subunit family. As to quaternary structure, NDH-1 is composed of 14 different subunits. Subunits NuoB, C, D, E, F, and G constitute the peripheral sector of the complex. [4Fe-4S] cluster serves as cofactor.

Its subcellular location is the cell inner membrane. The catalysed reaction is a quinone + NADH + 5 H(+)(in) = a quinol + NAD(+) + 4 H(+)(out). Functionally, NDH-1 shuttles electrons from NADH, via FMN and iron-sulfur (Fe-S) centers, to quinones in the respiratory chain. Couples the redox reaction to proton translocation (for every two electrons transferred, four hydrogen ions are translocated across the cytoplasmic membrane), and thus conserves the redox energy in a proton gradient. In Chelativorans sp. (strain BNC1), this protein is NADH-quinone oxidoreductase subunit B.